The following is a 156-amino-acid chain: Small ribosomal subunit protein uS7 (156 aa).

Belongs to the universal ribosomal protein uS7 family. In terms of assembly, part of the 30S ribosomal subunit. Contacts proteins S9 and S11.

Its function is as follows. One of the primary rRNA binding proteins, it binds directly to 16S rRNA where it nucleates assembly of the head domain of the 30S subunit. Is located at the subunit interface close to the decoding center, probably blocks exit of the E-site tRNA. The protein is Small ribosomal subunit protein uS7 of Campylobacter fetus subsp. fetus (strain 82-40).